The following is a 229-amino-acid chain: ATP synthase subunit a (229 aa).

6 helical membrane-spanning segments follow: residues 14 to 34 (LIAITNSSMMMMLAVAVALIL), 68 to 88 (YFPFVFTLFIFIVFLNILGLF), 98 to 118 (IVVTLGLSFSIVIGVTLGGLW), 124 to 144 (FLSILMPAGAPLALAPLLVLI), 157 to 179 (GVRLAANLSAGHLLFAILAGFGF), and 189 to 209 (NIFPVLIMVFISLLEAAVAVI).

The protein belongs to the ATPase A chain family. In terms of assembly, F-type ATPases have 2 components, CF(1) - the catalytic core - and CF(0) - the membrane proton channel. CF(1) has five subunits: alpha(3), beta(3), gamma(1), delta(1), epsilon(1). CF(0) has three main subunits: a, b and c.

The protein localises to the mitochondrion inner membrane. Functionally, mitochondrial membrane ATP synthase (F(1)F(0) ATP synthase or Complex V) produces ATP from ADP in the presence of a proton gradient across the membrane which is generated by electron transport complexes of the respiratory chain. F-type ATPases consist of two structural domains, F(1) - containing the extramembraneous catalytic core and F(0) - containing the membrane proton channel, linked together by a central stalk and a peripheral stalk. During catalysis, ATP synthesis in the catalytic domain of F(1) is coupled via a rotary mechanism of the central stalk subunits to proton translocation. Key component of the proton channel; it may play a direct role in the translocation of protons across the membrane. The sequence is that of ATP synthase subunit a (ATPASE6) from Metridium senile (Brown sea anemone).